The chain runs to 343 residues: MSSQAGNVGSSSSSLAGVRMVVSPKAQLRHARLPAASASMYSDAKYDLNNYKFEPIKESIVAREMTRRYMTEMITHADTDVVVVGAGSAGLSCAYELSKNPNVKVAIIEQSVSPGGGAWLGGQLFSAMVVRKPAHRFLDEIEVPYEELENYVVIKHAALFTSTIMSKLLARPNVKLFNAVAAEDLIIRGDRVSGVVTNWALVAQNHNTQSCMDPNVMEAKVVVSSCGHDGPFGATGVKRLRSIGMIESVPGMKCLDMNAAEDAIVKHTREVVPGMIVTGMEVAEIDGSPRMGPTFGAMMISGQKAAHLALKALGLPNELDGNYKLNVHPELVLASTDDETASA.

Residues A89, 109–110 (EQ), G117, and A182 contribute to the substrate site. At C211 the chain carries 2,3-didehydroalanine (Cys). Residues D213, H228, M280, and 290–292 (RMG) each bind substrate.

Belongs to the THI4 family. Homooctamer. Fe cation is required as a cofactor. During the catalytic reaction, a sulfide is transferred from Cys-211 to a reaction intermediate, generating a dehydroalanine residue.

The protein resides in the plastid. It localises to the chloroplast. The catalysed reaction is [ADP-thiazole synthase]-L-cysteine + glycine + NAD(+) = [ADP-thiazole synthase]-dehydroalanine + ADP-5-ethyl-4-methylthiazole-2-carboxylate + nicotinamide + 3 H2O + 2 H(+). Its function is as follows. Involved in biosynthesis of the thiamine precursor thiazole. Catalyzes the conversion of NAD and glycine to adenosine diphosphate 5-(2-hydroxyethyl)-4-methylthiazole-2-carboxylic acid (ADT), an adenylated thiazole intermediate. The reaction includes an iron-dependent sulfide transfer from a conserved cysteine residue of the protein to a thiazole intermediate. The enzyme can only undergo a single turnover, which suggests it is a suicide enzyme. May have additional roles in adaptation to various stress conditions and in DNA damage tolerance. This Physcomitrium patens (Spreading-leaved earth moss) protein is Thiamine thiazole synthase 4, chloroplastic.